A 465-amino-acid chain; its full sequence is Putrescine aminotransferase (465 aa).

Pyridoxal 5'-phosphate contacts are provided by residues 150-151 (GT) and Gln274. The residue at position 300 (Lys300) is an N6-(pyridoxal phosphate)lysine. Residue Thr332 participates in pyridoxal 5'-phosphate binding.

It belongs to the class-III pyridoxal-phosphate-dependent aminotransferase family. Putrescine aminotransferase subfamily. It depends on pyridoxal 5'-phosphate as a cofactor.

It catalyses the reaction an alkane-alpha,omega-diamine + 2-oxoglutarate = an omega-aminoaldehyde + L-glutamate. The catalysed reaction is putrescine + 2-oxoglutarate = 1-pyrroline + L-glutamate + H2O. The enzyme catalyses cadaverine + 2-oxoglutarate = 5-aminopentanal + L-glutamate. The protein operates within amine and polyamine degradation; putrescine degradation; 4-aminobutanal from putrescine (transaminase route): step 1/1. Functionally, catalyzes the aminotransferase reaction from putrescine to 2-oxoglutarate, leading to glutamate and 4-aminobutanal, which spontaneously cyclizes to form 1-pyrroline. This is the first step in one of two pathways for putrescine degradation, where putrescine is converted into 4-aminobutanoate (gamma-aminobutyrate or GABA) via 4-aminobutanal. Also functions as a cadaverine transaminase in a a L-lysine degradation pathway to succinate that proceeds via cadaverine, glutarate and L-2-hydroxyglutarate. This Cronobacter sakazakii (strain ATCC BAA-894) (Enterobacter sakazakii) protein is Putrescine aminotransferase.